The primary structure comprises 104 residues: MEKRSFKEKLEIIRNIIRESLLGNAAIIALIYAASHSLPVNAFPDYLVISLLSIAAGIVVLWLFSIIYIYFCELFRSHWIAVWFIIWSSVINLIILYGFYDRFI.

This chain is Protein ArtA (artA), found in Escherichia coli (strain K12).